The following is a 24-amino-acid chain: Xenoposin precursor fragment B2 (24 aa).

In terms of tissue distribution, expressed by the skin glands.

The protein resides in the secreted. In terms of biological role, has antimicrobial activity against Gram-negative bacterium E.coli ATCC 25922 (MIC=100 uM), Gram-positive bacterium S.auerus ATCC 25923 (MIC=25 uM). The protein is Xenoposin precursor fragment B2 of Xenopus borealis (Kenyan clawed frog).